The chain runs to 458 residues: NADH-ubiquinone oxidoreductase chain 4 (458 aa).

A run of 13 helical transmembrane segments spans residues 23-43 (LLWT…TLTL), 59-79 (IDQF…LTIM), 99-119 (LLIL…LLMF), 148-168 (LYFL…LIMI), 174-194 (SLSI…TPWS), 197-217 (LWWI…IFHL), 227-247 (PIAG…YGMI), 260-280 (LAVP…SICL), 289-311 (IAYS…TPWA), 315-337 (ALAM…NITY), 355-375 (FPLM…LPPF), 396-416 (ILLL…MLIM), and 438-458 (LMLM…AIMI).

The protein belongs to the complex I subunit 4 family.

The protein resides in the mitochondrion membrane. It carries out the reaction a ubiquinone + NADH + 5 H(+)(in) = a ubiquinol + NAD(+) + 4 H(+)(out). Core subunit of the mitochondrial membrane respiratory chain NADH dehydrogenase (Complex I) that is believed to belong to the minimal assembly required for catalysis. Complex I functions in the transfer of electrons from NADH to the respiratory chain. The immediate electron acceptor for the enzyme is believed to be ubiquinone. The chain is NADH-ubiquinone oxidoreductase chain 4 (MT-ND4) from Petromyzon marinus (Sea lamprey).